Reading from the N-terminus, the 584-residue chain is Dihydroxyacetone kinase 1 (584 aa).

N-acetylserine is present on serine 2. A phosphoserine mark is found at serine 2 and serine 5. In terms of domain architecture, DhaK spans 7 to 353 (EVTDPVNSSL…LNAFTNAPGW (347 aa)). Residues 51-54 (GSGH), lysine 103, and aspartate 108 each bind substrate. Catalysis depends on histidine 220, which acts as the Tele-hemiaminal-histidine intermediate. Phosphoserine is present on serine 365. The DhaL domain occupies 386-582 (DKFAEWMKSG…LCEFLKGVQS (197 aa)). ATP contacts are provided by residues 415 to 418 (DGDC) and 459 to 460 (TS). Residue serine 512 is modified to Phosphoserine. Residues 514–515 (TM) and 567–569 (DPG) contribute to the ATP site.

This sequence belongs to the dihydroxyacetone kinase (DAK) family.

The enzyme catalyses dihydroxyacetone + ATP = dihydroxyacetone phosphate + ADP + H(+). The catalysed reaction is D-glyceraldehyde + ATP = D-glyceraldehyde 3-phosphate + ADP + H(+). The protein operates within polyol metabolism; glycerol fermentation; glycerone phosphate from glycerol (oxidative route): step 2/2. Catalyzes both the phosphorylation of dihydroxyacetone and of glyceraldehyde. This is Dihydroxyacetone kinase 1 (DAK1) from Saccharomyces cerevisiae (strain ATCC 204508 / S288c) (Baker's yeast).